Consider the following 1321-residue polypeptide: Indole-3-acetaldehyde oxidase (1321 aa).

The region spanning 1-90 (MSLVFAINGQ…HCNITTSEGL (90 aa)) is the 2Fe-2S ferredoxin-type domain. [2Fe-2S] cluster is bound by residues cysteine 42, cysteine 47, and cysteine 50. In terms of domain architecture, FAD-binding PCMH-type spans 215 to 404 (VDSGMYRWCS…LSIEIPFWHS (190 aa)).

This sequence belongs to the xanthine dehydrogenase family. In terms of assembly, aldehyde oxidases (AO) are homodimers and heterodimers of AO subunits. AO-beta is a AAO1-AAO2 heterodimer; AO-gamma is a AAO2 homodimer. AAO2 also forms a dimer with AAO3. The cofactor is [2Fe-2S] cluster. Requires FAD as cofactor. It depends on Mo-molybdopterin as a cofactor. As to expression, weakly expressed in roots, leaves and seedlings. In seedlings, mostly expressed in lower part of hypocotyls. Detectable in seeds and mature siliques at low levels.

It localises to the cytoplasm. The catalysed reaction is indole-3-acetaldehyde + O2 + H2O = (indol-3-yl)acetate + H2O2 + H(+). Strongly inhibited by iodoacetate, potassium cyanide (KCN), 2-mercaptoethanol, dithiothreitol (DTT), p-chloromercuribenzoate, menadione and estradiol. Weakly inhibited by 4'-(9-acridinylamino)methanesulfon-m-anisidine (mAMSA) and tritonX-100. Not affected by allopurinol. In higher plant aldehyde oxidases (AO) appear to be homo- and heterodimeric assemblies of AO subunits with probably different physiological functions. In vitro, AO-gamma uses heptaldehyde, benzaldehyde, naphthaldehyde and cinnamaldehyde as substrates; AO-beta uses indole-3-acetaldehyde (IAAld), indole-3-aldehyde (IAld) and naphtaldehyde; the AAO2-AAO3 dimer uses abscisic aldehyde. The sequence is that of Indole-3-acetaldehyde oxidase (AAO2) from Arabidopsis thaliana (Mouse-ear cress).